A 161-amino-acid chain; its full sequence is Regulator of ribonuclease activity A (161 aa).

This sequence belongs to the RraA family. In terms of assembly, homotrimer. Binds to both RNA-binding sites in the C-terminal region of Rne and to RhlB.

The protein localises to the cytoplasm. Functionally, globally modulates RNA abundance by binding to RNase E (Rne) and regulating its endonucleolytic activity. Can modulate Rne action in a substrate-dependent manner by altering the composition of the degradosome. Modulates RNA-binding and helicase activities of the degradosome. The protein is Regulator of ribonuclease activity A of Sodalis glossinidius (strain morsitans).